The sequence spans 130 residues: Guanylate kinase (130 aa).

Residues 1–130 (KIFEDPTTSY…EKIQSRVNEA (130 aa)) form the Guanylate kinase-like domain.

The protein belongs to the guanylate kinase family.

The protein localises to the cytoplasm. It catalyses the reaction GMP + ATP = GDP + ADP. Its function is as follows. Essential for recycling GMP and indirectly, cGMP. This chain is Guanylate kinase (gmk), found in Staphylococcus epidermidis.